Reading from the N-terminus, the 620-residue chain is MPGRKFADGEVVRGRWPGSSLYYEVEILSHDSTSQLYTVKYKDGTELELKESDIKPLKSFKQRKSGSTSSSPSRRRSSRSRSRSRSRSPGRAPKGSRRSVSASYQADAKEKEMRREILQVKLTPLVLKPFANSVSVYNGEPEHMEKSATPPKNKQERVILSTEDSYIATQYSLRPRREEVKPKHRVRGTNLVTRGPVPLGTFQVTTPQRRDLEFGGVPGALLIMLGLPACVFLLLLQCAQKDPGLLQFPPPLPALRELWEARVCGVYLLWFFLQALFSLLPVGKVVEGTPLVDGRRLKYRLNGLYAFILTSAAVGTAVFWDIELYYLYTHFLQFALAAIVFSVVLSVYLYARSLKVPRDELSPASSGNAVYDFFIGRELNPRIGAFDLKFFCELRPGLIGWVVINLVMLLAEMKVQERSAPSLAMTLVNSFQLLYVVDALWFEEALLTTMDIIHDGFGFMLAFGDLVWVPFTYSLQAFYLVNHPQDLSWPLTSVIIALKLCGYVIFRCANSQKNAFRKNPTDPKLAHLKTIPTSTWKSLLVSGWWGFVRHPNYLGDLIMALAWSLPCGFNHILPYFYVIYFTALLIHREARDEHQCRRKYGLAWEKYCQRVPYRIFPYIY.

A Tudor domain is found at 1–62; it reads MPGRKFADGE…DIKPLKSFKQ (62 aa). Topologically, residues 1–215 are nuclear; sequence MPGRKFADGE…TPQRRDLEFG (215 aa). The disordered stretch occupies residues 52-111; the sequence is SDIKPLKSFKQRKSGSTSSSPSRRRSSRSRSRSRSRSPGRAPKGSRRSVSASYQADAKEK. An N6-acetyllysine modification is found at lysine 55. Residues serine 59 and serine 67 each carry the phosphoserine modification. Phosphoserine; by CDK1 is present on residues serine 71 and serine 86. Basic residues predominate over residues 73–88; the sequence is SRRRSSRSRSRSRSRS. Serine 88 is subject to Phosphoserine. The O-linked (GlcNAc) serine glycan is linked to serine 96. Phosphoserine occurs at positions 99 and 101. Threonine 123 is subject to Phosphothreonine. Serine 133 bears the Phosphoserine mark. At threonine 205 the chain carries Phosphothreonine. 8 helical membrane passes run 216–236, 263–283, 304–324, 331–351, 452–472, 486–506, 525–547, and 566–586; these read GVPG…LLLL, VCGV…LPVG, LYAF…DIEL, FLQF…YLYA, IIHD…VPFT, DLSW…YVIF, LAHL…WWGF, and PCGF…ALLI. N6-acetyllysine is present on residues lysine 599 and lysine 606.

This sequence belongs to the ERG4/ERG24 family. Interacts with CBX5. Interacts with DNA. Interaction with DNA is sequence independent with higher affinity for supercoiled and relaxed circular DNA than linear DNA. Interacts with lamin B. Interacts with CLNK. Interacts with TMEM147; promoting LBR localization to the nucleus inner membrane. Phosphorylated by CDK1 in mitosis when the inner nuclear membrane breaks down into vesicles that dissociate from the lamina and the chromatin. It is phosphorylated by different protein kinases in interphase when the membrane is associated with these structures. Phosphorylation of LBR and HP1 proteins may be responsible for some of the alterations in chromatin organization and nuclear structure which occur at various times during the cell cycle. Phosphorylated by SRPK1. In late anaphase LBR is dephosphorylated, probably by PP1 and/or PP2A, allowing reassociation with chromatin.

Its subcellular location is the nucleus inner membrane. It localises to the nucleus. The protein localises to the cytoplasm. The protein resides in the endoplasmic reticulum membrane. The enzyme catalyses 5alpha-cholest-8,14-dien-3beta-ol + NADPH + H(+) = 5alpha-cholest-8-en-3beta-ol + NADP(+). The catalysed reaction is 4,4-dimethyl-5alpha-cholesta-8,24-dien-3beta-ol + NADP(+) = 4,4-dimethyl-5alpha-cholesta-8,14,24-trien-3beta-ol + NADPH + H(+). It catalyses the reaction 4,4-dimethyl-8,14-cholestadien-3beta-ol + NADPH + H(+) = 4,4-dimethyl-5alpha-cholest-8-en-3beta-ol + NADP(+). The protein operates within steroid biosynthesis; cholesterol biosynthesis. In terms of biological role, catalyzes the reduction of the C14-unsaturated bond of lanosterol, as part of the metabolic pathway leading to cholesterol biosynthesis. Plays a critical role in myeloid cell cholesterol biosynthesis which is essential to both myeloid cell growth and functional maturation. Mediates the activation of NADPH oxidases, perhaps by maintaining critical levels of cholesterol required for membrane lipid raft formation during neutrophil differentiation. Anchors the lamina and the heterochromatin to the inner nuclear membrane. This Rattus norvegicus (Rat) protein is Delta(14)-sterol reductase LBR (Lbr).